A 175-amino-acid chain; its full sequence is ATP-dependent protease subunit HslV (175 aa).

Residue T2 is part of the active site. The Na(+) site is built by A156, C159, and T162.

It belongs to the peptidase T1B family. HslV subfamily. A double ring-shaped homohexamer of HslV is capped on each side by a ring-shaped HslU homohexamer. The assembly of the HslU/HslV complex is dependent on binding of ATP.

The protein resides in the cytoplasm. It carries out the reaction ATP-dependent cleavage of peptide bonds with broad specificity.. Its activity is regulated as follows. Allosterically activated by HslU binding. Protease subunit of a proteasome-like degradation complex believed to be a general protein degrading machinery. This is ATP-dependent protease subunit HslV from Rhizobium johnstonii (strain DSM 114642 / LMG 32736 / 3841) (Rhizobium leguminosarum bv. viciae).